The following is a 276-amino-acid chain: MTAASTTATTVLQATQSDVLQEIQSNFLLNSSIWVNIALAGVVILLFVAMGRDLESPRAKLIWVATMLVPLVSISSYAGLASGLTVGFLQMPPGHALAGQEVLSPWGRYLTWTFSTPMILLALGLLADTDIASLFTAITMDIGMCVTGLAAALITSSHLLRWVFYGISCAFFVAVLYVLLVQWPADAEAAGTSEIFGTLKILTVVLWLGYPILWALGSEGVALLSVGVTSWGYSGLDILAKYVFAFLLLRWVAANEGTVSGSGMGIGSGGATPADD.

The propeptide occupies 1–20 (MTAASTTATTVLQATQSDVL). The residue at position 21 (Q21) is a Pyrrolidone carboxylic acid. The next 7 membrane-spanning stretches (helical) occupy residues 31–51 (SSIW…VAMG), 61–81 (LIWV…AGLA), 109–129 (YLTW…LADT), 134–154 (LFTA…AALI), 162–182 (WVFY…LLVQ), 195–215 (IFGT…ILWA), and 220–240 (GVAL…DILA). At K241 the chain carries N6-(retinylidene)lysine.

The protein belongs to the archaeal/bacterial/fungal opsin family. The covalent binding of retinal to the apoprotein, bacterioopsin, generates bacteriorhodopsin.

Its subcellular location is the membrane. Light-driven chloride pump. This Haloarcula marismortui (strain ATCC 43049 / DSM 3752 / JCM 8966 / VKM B-1809) (Halobacterium marismortui) protein is Halorhodopsin (hop).